A 223-amino-acid polypeptide reads, in one-letter code: Probable transaldolase (223 aa).

Lysine 83 serves as the catalytic Schiff-base intermediate with substrate.

This sequence belongs to the transaldolase family. Type 3B subfamily.

The protein localises to the cytoplasm. The catalysed reaction is D-sedoheptulose 7-phosphate + D-glyceraldehyde 3-phosphate = D-erythrose 4-phosphate + beta-D-fructose 6-phosphate. The protein operates within carbohydrate degradation; pentose phosphate pathway; D-glyceraldehyde 3-phosphate and beta-D-fructose 6-phosphate from D-ribose 5-phosphate and D-xylulose 5-phosphate (non-oxidative stage): step 2/3. Its function is as follows. Transaldolase is important for the balance of metabolites in the pentose-phosphate pathway. The chain is Probable transaldolase from Myxococcus xanthus (strain DK1622).